The primary structure comprises 243 residues: Probable ubiquitin-conjugating enzyme E2 33 (243 aa).

The region spanning 5–162 (ACIKRLQKEY…FPEYVEKYSQ (158 aa)) is the UBC core domain. C87 functions as the Glycyl thioester intermediate in the catalytic mechanism. A disordered region spans residues 168-197 (EEAATQQTTTSENQDFPQKDNAKVESEKSV). Residues 184-197 (PQKDNAKVESEKSV) are compositionally biased toward basic and acidic residues. A helical membrane pass occupies residues 220–240 (LPGWIVLLLVSIVGVVMALPL).

This sequence belongs to the ubiquitin-conjugating enzyme family.

Its subcellular location is the membrane. It carries out the reaction S-ubiquitinyl-[E1 ubiquitin-activating enzyme]-L-cysteine + [E2 ubiquitin-conjugating enzyme]-L-cysteine = [E1 ubiquitin-activating enzyme]-L-cysteine + S-ubiquitinyl-[E2 ubiquitin-conjugating enzyme]-L-cysteine.. Its pathway is protein modification; protein ubiquitination. Functionally, accepts the ubiquitin from the E1 complex and catalyzes its covalent attachment to other proteins. This Arabidopsis thaliana (Mouse-ear cress) protein is Probable ubiquitin-conjugating enzyme E2 33 (UBC33).